The following is a 270-amino-acid chain: Formamidopyrimidine-DNA glycosylase (270 aa).

The Schiff-base intermediate with DNA role is filled by P2. E3 (proton donor) is an active-site residue. The active-site Proton donor; for beta-elimination activity is K58. DNA is bound by residues H91, R110, and R151. An FPG-type zinc finger spans residues R236–R270. R260 (proton donor; for delta-elimination activity) is an active-site residue.

The protein belongs to the FPG family. In terms of assembly, monomer. It depends on Zn(2+) as a cofactor.

The enzyme catalyses Hydrolysis of DNA containing ring-opened 7-methylguanine residues, releasing 2,6-diamino-4-hydroxy-5-(N-methyl)formamidopyrimidine.. It carries out the reaction 2'-deoxyribonucleotide-(2'-deoxyribose 5'-phosphate)-2'-deoxyribonucleotide-DNA = a 3'-end 2'-deoxyribonucleotide-(2,3-dehydro-2,3-deoxyribose 5'-phosphate)-DNA + a 5'-end 5'-phospho-2'-deoxyribonucleoside-DNA + H(+). Functionally, involved in base excision repair of DNA damaged by oxidation or by mutagenic agents. Acts as a DNA glycosylase that recognizes and removes damaged bases. Has a preference for oxidized purines, such as 7,8-dihydro-8-oxoguanine (8-oxoG). Has AP (apurinic/apyrimidinic) lyase activity and introduces nicks in the DNA strand. Cleaves the DNA backbone by beta-delta elimination to generate a single-strand break at the site of the removed base with both 3'- and 5'-phosphates. The sequence is that of Formamidopyrimidine-DNA glycosylase from Thiobacillus denitrificans (strain ATCC 25259 / T1).